The following is a 207-amino-acid chain: Holliday junction branch migration complex subunit RuvA (207 aa).

Residues methionine 1 to asparagine 64 are domain I. The domain II stretch occupies residues threonine 65–proline 143. The interval alanine 144–threonine 158 is flexible linker. Residues serine 159–isoleucine 207 form a domain III region.

Belongs to the RuvA family. In terms of assembly, homotetramer. Forms an RuvA(8)-RuvB(12)-Holliday junction (HJ) complex. HJ DNA is sandwiched between 2 RuvA tetramers; dsDNA enters through RuvA and exits via RuvB. An RuvB hexamer assembles on each DNA strand where it exits the tetramer. Each RuvB hexamer is contacted by two RuvA subunits (via domain III) on 2 adjacent RuvB subunits; this complex drives branch migration. In the full resolvosome a probable DNA-RuvA(4)-RuvB(12)-RuvC(2) complex forms which resolves the HJ.

It localises to the cytoplasm. The RuvA-RuvB-RuvC complex processes Holliday junction (HJ) DNA during genetic recombination and DNA repair, while the RuvA-RuvB complex plays an important role in the rescue of blocked DNA replication forks via replication fork reversal (RFR). RuvA specifically binds to HJ cruciform DNA, conferring on it an open structure. The RuvB hexamer acts as an ATP-dependent pump, pulling dsDNA into and through the RuvAB complex. HJ branch migration allows RuvC to scan DNA until it finds its consensus sequence, where it cleaves and resolves the cruciform DNA. The chain is Holliday junction branch migration complex subunit RuvA from Aliivibrio fischeri (strain MJ11) (Vibrio fischeri).